The chain runs to 897 residues: Staphylococcal nuclease domain-containing protein 1 (897 aa).

4 TNase-like domains span residues 18–167, 194–329, 342–499, and 528–663; these read QLQR…LWSE, KPVN…IWKD, RQFV…LHSK, and GRSE…LWAN. In terms of domain architecture, Tudor spans 732-790; the sequence is APRRGEFCIAKFADGEWYRARVEKVESPAKVHVFYIDYGNREVLSSTRLAALPPAFSTR.

The protein resides in the cytoplasm. This Danio rerio (Zebrafish) protein is Staphylococcal nuclease domain-containing protein 1 (snd1).